The sequence spans 783 residues: Serine/threonine-protein kinase SIK1 (783 aa).

Positions 27–278 (YDIERTLGKG…IAQIRQHRWM (252 aa)) constitute a Protein kinase domain. ATP is bound by residues 33 to 41 (LGKGNFAVV) and K56. Catalysis depends on D149, which acts as the Proton acceptor. T182 carries the post-translational modification Phosphothreonine; by LKB1 and GSK3-beta. Phosphoserine; by autocatalysis is present on S186. In terms of domain architecture, UBA spans 303–343 (DYDEQALGIMQTLGVDRQRTVESLQNSSYNHFAAIYYLLLE). T322 is modified (phosphothreonine; by CaMK1). Disordered stretches follow at residues 353-377 (CARP…VPQE) and 449-477 (RQGP…LAEV). A Phosphothreonine; by PKA modification is found at T473. S575 bears the Phosphoserine; by PKA mark. The tract at residues 583–612 (LKAFRQQLRKTTRTKGFLGLNKIKGLARQV) is RK-rich region; required for cAMP responsiveness and nuclear localization. The disordered stretch occupies residues 619 to 643 (RASRGGLSPFHAPAQSPGLHGGAAG).

Belongs to the protein kinase superfamily. CAMK Ser/Thr protein kinase family. AMPK subfamily. As to quaternary structure, interacts with ATP1A1. Interacts (when phosphorylated on Thr-182 and Ser-186) with YWHAZ. Interacts (when phosphorylated at Thr-473 and/or Ser-575) with 14-3-3 proteins; the interaction inhibits kinase activity towards TORCs. There is a cooperative effect of the phosphorylation sites in 14-3-3 binding as the interaction is stronger when both Thr-473 and Ser-575 are modified. Mg(2+) is required as a cofactor. Post-translationally, phosphorylated at Thr-182 by STK11/LKB1 in complex with STE20-related adapter-alpha (STRADA) pseudo kinase and CAB39, leading to its activation. Phosphorylation at Thr-182 promotes autophosphorylation at Ser-186, which is required for sustained activity. Autophosphorylation at Ser-186 is maintained by sequential phosphorylation at Thr-182 by GSK3-beta. GSK3-beta cannot initiate phosphorylation at Thr-182, it can only maintain it. Phosphorylation at Ser-575 in response to cAMP signaling promotes translocation to the cytoplasm. Phosphorylation at Thr-322 by CaMK1 following intracellular sodium concentration leads to activation.

The protein resides in the cytoplasm. The protein localises to the nucleus. The enzyme catalyses L-seryl-[protein] + ATP = O-phospho-L-seryl-[protein] + ADP + H(+). It carries out the reaction L-threonyl-[protein] + ATP = O-phospho-L-threonyl-[protein] + ADP + H(+). With respect to regulation, activated by phosphorylation on Thr-182. Also activated by phosphorylation on Thr-322 in response to increases in intracellular sodium in parallel with elevations in intracellular calcium through the reversible sodium/calcium exchanger. Inhibited by phosphorylation at Thr-473 and Ser-575, probably by PKA, which triggers interaction with 14-3-3 proteins. In terms of biological role, serine/threonine-protein kinase involved in various processes such as cell cycle regulation, gluconeogenesis and lipogenesis regulation, muscle growth and differentiation and tumor suppression. Phosphorylates HDAC4, HDAC5, PPME1, SREBF1, CRTC1/TORC1. Inhibits CREB activity by phosphorylating and inhibiting activity of TORCs, the CREB-specific coactivators, like CRTC2/TORC2 and CRTC3/TORC3 in response to cAMP signaling. Acts as a tumor suppressor and plays a key role in p53/TP53-dependent anoikis, a type of apoptosis triggered by cell detachment: required for phosphorylation of p53/TP53 in response to loss of adhesion and is able to suppress metastasis. Part of a sodium-sensing signaling network, probably by mediating phosphorylation of PPME1: following increases in intracellular sodium, SIK1 is activated by CaMK1 and phosphorylates PPME1 subunit of protein phosphatase 2A (PP2A), leading to dephosphorylation of sodium/potassium-transporting ATPase ATP1A1 and subsequent increase activity of ATP1A1. Acts as a regulator of muscle cells by phosphorylating and inhibiting class II histone deacetylases HDAC4 and HDAC5, leading to promote expression of MEF2 target genes in myocytes. Also required during cardiomyogenesis by regulating the exit of cardiomyoblasts from the cell cycle via down-regulation of CDKN1C/p57Kip2. Acts as a regulator of hepatic gluconeogenesis by phosphorylating and repressing the CREB-specific coactivators CRTC1/TORC1 and CRTC2/TORC2, leading to inhibit CREB activity. Also regulates hepatic lipogenesis by phosphorylating and inhibiting SREBF1. In concert with CRTC1/TORC1, regulates the light-induced entrainment of the circadian clock by attenuating PER1 induction; represses CREB-mediated transcription of PER1 by phosphorylating and deactivating CRTC1/TORC1. This chain is Serine/threonine-protein kinase SIK1 (SIK1), found in Homo sapiens (Human).